The following is a 352-amino-acid chain: Keratocan (352 aa).

A signal peptide spans 1–20 (MAGTICFIMWVLFITDTVWS). The LRRNT domain maps to 33-71 (DDWTIHDFECPMECFCPPSFPTALYCENRGLKEIPAIPS). Cystine bridges form between cysteine 42–cysteine 48 and cysteine 46–cysteine 58. LRR repeat units follow at residues 72-93 (RIWYLYLQNNLIETIPEKPFEN), 96-117 (QLRWINLNKNKITNYGIEKGAL), 122-142 (KLLFLFLEDNELEEVPSPLPR), 143-164 (SLEQLQLARNKVSRIPQGTFSN), 167-180 (NLTLLDLQNNKLVD), 193-213 (NLMQLNMAKNALRNMPPRLPA), 214-235 (NTMQLFLDNNSIEGIPENYFNV), 238-258 (KVAFLRLNHNKLSDEGLPSRG), 263-282 (SILDLQLSHNQLTKVPRISA), and 283-304 (HLQHLHLDHNKIKSVNVSVICP). Asparagine 93 carries N-linked (GlcNAc...) (keratan sulfate) asparagine glycosylation. A glycan (N-linked (GlcNAc...) (keratan sulfate) asparagine) is linked at asparagine 167. A glycan (N-linked (GlcNAc...) asparagine) is linked at asparagine 222. An N-linked (GlcNAc...) asparagine glycan is attached at asparagine 298. Cysteines 303 and 343 form a disulfide.

The protein belongs to the small leucine-rich proteoglycan (SLRP) family. SLRP class II subfamily. Binds keratan sulfate chains. As to expression, cornea (at protein level). Increased expression in the stroma of keratoconus corneas. Also detected in trachea, and in low levels, in intestine, skeletal muscle, ovary, lung and putamen.

Its subcellular location is the secreted. It localises to the extracellular space. The protein resides in the extracellular matrix. Its function is as follows. May be important in developing and maintaining corneal transparency and for the structure of the stromal matrix. The sequence is that of Keratocan (KERA) from Homo sapiens (Human).